Consider the following 378-residue polypeptide: Chaperone protein DnaJ (378 aa).

The J domain occupies 6-70; that stretch reads DYYDVLGVSR…QKRQQYDQFG (65 aa). Residues 137 to 219 form a CR-type zinc finger; sequence GKTSEISYSR…CHGKGVKTQK (83 aa). Residues Cys150, Cys153, Cys167, Cys170, Cys193, Cys196, Cys207, and Cys210 each coordinate Zn(2+). 4 CXXCXGXG motif repeats span residues 150 to 157, 167 to 174, 193 to 200, and 207 to 214; these read CEVCKGSG, CDKCGGSG, CDKCAGSG, and CHNCHGKG.

The protein belongs to the DnaJ family. Homodimer. It depends on Zn(2+) as a cofactor.

The protein resides in the cytoplasm. In terms of biological role, participates actively in the response to hyperosmotic and heat shock by preventing the aggregation of stress-denatured proteins and by disaggregating proteins, also in an autonomous, DnaK-independent fashion. Unfolded proteins bind initially to DnaJ; upon interaction with the DnaJ-bound protein, DnaK hydrolyzes its bound ATP, resulting in the formation of a stable complex. GrpE releases ADP from DnaK; ATP binding to DnaK triggers the release of the substrate protein, thus completing the reaction cycle. Several rounds of ATP-dependent interactions between DnaJ, DnaK and GrpE are required for fully efficient folding. Also involved, together with DnaK and GrpE, in the DNA replication of plasmids through activation of initiation proteins. This chain is Chaperone protein DnaJ, found in Lactobacillus delbrueckii subsp. bulgaricus (strain ATCC BAA-365 / Lb-18).